The chain runs to 416 residues: Iron/alpha-ketoglutarate-dependent dioxygenase asqJ (416 aa).

Residues 1–53 (MGYPKAFTSSDSEPEPDLSRDLGNPVMGNPGVVSRSSSTVAQHSVRNNPTGPD) form a disordered region. Residues 34 to 50 (SRSSSTVAQHSVRNNPT) show a composition bias toward polar residues. Residues H242, D244, and H319 each contribute to the Fe cation site.

Belongs to the PhyH family. As to quaternary structure, homodimer. Fe cation is required as a cofactor.

It carries out the reaction (-)-4'-methoxycyclopeptine + 2-oxoglutarate + O2 = (Z)-4'-methoxydehydrocyclopeptine + succinate + CO2 + H2O. It catalyses the reaction (Z)-4'-methoxydehydrocyclopeptine + 2-oxoglutarate + O2 = (-)-4'-methoxycyclopenine + succinate + CO2. The enzyme catalyses (-)-cyclopeptine + 2-oxoglutarate + O2 = (Z)-dehydrocyclopeptine + succinate + CO2 + H2O. The catalysed reaction is (Z)-dehydrocyclopeptine + 2-oxoglutarate + O2 = (-)-cyclopenine + succinate + CO2. It participates in secondary metabolite biosynthesis. It functions in the pathway alkaloid biosynthesis. The protein operates within mycotoxin biosynthesis. Functionally, iron/alpha-ketoglutarate-dependent dioxygenase; part of the gene cluster that mediates the biosynthesis of the aspoquinolone mycotoxins. Within the pathway, the iron/alpha-ketoglutarate-dependent dioxygenase asqJ acts as a (-)-cyclopenine synthase that converts 4'-methoxycyclopeptin into 4'-methoxydehydrocyclopeptin through dehydrogenation to form a double bond between C-alpha and C-beta of the O-methyltyrosine side chain. AsqJ is a very unique dioxygenase which is capable of catalyzing radical-mediated dehydrogenation and epoxidation reactions sequentially on a 6,7-benzo-diazepinedione substrate in the 4'-methoxyviridicatin biosynthetic pathway. AsqJ is also capable of converting cyclopeptin into dehydrocyclopeptin. The first step of the pathway is catalyzed by the nonribosomal peptide synthetase asqK that condenses anthranilic acid and O-methyl-L-tyrosine to produce 4'-methoxycyclopeptin. 4'-methoxycyclopeptin is then converted to 4'-methoxydehydrocyclopeptin by the ketoglutarate-dependent dioxygenase asqJ. AsqJ also converts its first product 4'-methoxydehydrocyclopeptin to 4'-methoxycyclopenin. The following conversion of 4'-methoxycyclopenin into 4'-methoxyviridicatin is catalyzed by the cyclopenase asqI. 4'-methoxyviridicatin is the precursor of quinolone natural products, and is further converted to quinolinone B. The prenyltransferase asqH1 then catalyzes the canonical Friedel-Crafts alkylation of quinolinone B with dimethylallyl cation to yield dimethylallyl quinolone, which is subjected to FAD-dependent dehydrogenation by the FAD-linked oxidoreductase asqF to yield conjugated aryl diene. The delta(3') double bond then serves as the site of the second alkylation with DMAPP catalyzed by the prenyltransferase asqH2 to yield a carbenium ion intermediate, which can be attacked by H(2)O to yield a styrenyl quinolone containing a C3'-hydroxyprenyl chain. The FAD-dependent monooxygenase asqG performs epoxidation of the terminal C7'-C8' olefin. Finally, after dehydratation of the epoxide at C3 by asqC, the quinolone epoxide rearrangement protein asqO catalyzes an enzymatic 3-exo-tet cyclization to yield the cyclopropyl-THF ring system in aspoquinolone. The chain is Iron/alpha-ketoglutarate-dependent dioxygenase asqJ from Emericella nidulans (strain FGSC A4 / ATCC 38163 / CBS 112.46 / NRRL 194 / M139) (Aspergillus nidulans).